The sequence spans 1331 residues: Lysine-specific demethylase 3A-A (1331 aa).

Disordered stretches follow at residues 243-280 (LNDK…PSKD), 358-381 (TPPQ…TQNL), and 497-532 (KVVK…VTYP). The span at 266-280 (TELKQTRNEEVPSKD) shows a compositional bias: basic and acidic residues. The segment at 683 to 708 (CDACDTTIFNLHWVCPKCGFGVCVDC) adopts a C6-type zinc-finger fold. The LXXLL motif signature appears at 894-898 (LRNLL). The region spanning 1086–1291 (RREGKLNLAA…HCFWLTQEFR (206 aa)) is the JmjC domain. Fe cation-binding residues include His-1130, Asp-1132, and His-1259.

This sequence belongs to the JHDM2 histone demethylase family. The cofactor is Fe(2+).

It is found in the cytoplasm. Its subcellular location is the nucleus. The enzyme catalyses N(6),N(6)-dimethyl-L-lysyl(9)-[histone H3] + 2 2-oxoglutarate + 2 O2 = L-lysyl(9)-[histone H3] + 2 formaldehyde + 2 succinate + 2 CO2. Histone demethylase that specifically demethylates 'Lys-9' of histone H3, thereby playing a central role in histone code. Preferentially demethylates mono- and dimethylated H3 'Lys-9' residue, with a preference for dimethylated residue, while it has weak or no activity on trimethylated H3 'Lys-9'. Demethylation of Lys residue generates formaldehyde and succinate. This chain is Lysine-specific demethylase 3A-A (kdm3a-a), found in Xenopus laevis (African clawed frog).